The following is an 87-amino-acid chain: uncharacterized protein (87 aa).

The N-terminal stretch at M1–A23 is a signal peptide. The interval D24–D44 is disordered.

The protein resides in the secreted. This is an uncharacterized protein from Homo sapiens (Human).